A 116-amino-acid polypeptide reads, in one-letter code: uncharacterized protein (116 aa).

In terms of domain architecture, HTH cro/C1-type spans 6 to 60 (LKKCRKQKKLTQQNMADKLGITRPAYTAYELGSREPDYKTLINISNILDVSLDYL). A DNA-binding region (H-T-H motif) is located at residues 17 to 36 (QQNMADKLGITRPAYTAYEL).

This is an uncharacterized protein from Bacillus subtilis (strain 168).